Consider the following 375-residue polypeptide: 23S rRNA (uracil(747)-C(5))-methyltransferase RlmC (375 aa).

Positions 3, 11, 14, and 87 each coordinate [4Fe-4S] cluster. Positions 212, 241, 262, and 307 each coordinate S-adenosyl-L-methionine. Cys334 functions as the Nucleophile in the catalytic mechanism.

It belongs to the class I-like SAM-binding methyltransferase superfamily. RNA M5U methyltransferase family. RlmC subfamily.

It catalyses the reaction uridine(747) in 23S rRNA + S-adenosyl-L-methionine = 5-methyluridine(747) in 23S rRNA + S-adenosyl-L-homocysteine + H(+). In terms of biological role, catalyzes the formation of 5-methyl-uridine at position 747 (m5U747) in 23S rRNA. This chain is 23S rRNA (uracil(747)-C(5))-methyltransferase RlmC, found in Enterobacter sp. (strain 638).